The chain runs to 182 residues: CDP-diacylglycerol--glycerol-3-phosphate 3-phosphatidyltransferase (182 aa).

Topologically, residues 2–12 (QFNIPTLLTLF) are cytoplasmic. Residues 13-37 (RVILIPFFVLVFYLPVTWSPFAAAL) traverse the membrane as a helical segment. Residues 38-60 (IFCVAAVTDWFDGFLARRWNQST) are Periplasmic-facing. A helical transmembrane segment spans residues 61–81 (RFGAFLDPVADKVLVAIAMVL). Residues 82–86 (VTEHY) lie on the Cytoplasmic side of the membrane. A helical transmembrane segment spans residues 87–107 (HSWWVTLPAATMIAREIIISA). Over 108–145 (LREWMAELGKRSSVAVSWIGKVKTTAQMVALAWLLWRP) the chain is Periplasmic. Residues 146-168 (NIWVEYVGIALFFVAAVLTLWSM) traverse the membrane as a helical segment. Topologically, residues 169–181 (LQYLSAARADLLD) are cytoplasmic.

The protein belongs to the CDP-alcohol phosphatidyltransferase class-I family.

It is found in the cell inner membrane. It catalyses the reaction a CDP-1,2-diacyl-sn-glycerol + sn-glycerol 3-phosphate = a 1,2-diacyl-sn-glycero-3-phospho-(1'-sn-glycero-3'-phosphate) + CMP + H(+). It functions in the pathway phospholipid metabolism; phosphatidylglycerol biosynthesis; phosphatidylglycerol from CDP-diacylglycerol: step 1/2. Its function is as follows. Catalyzes the conversion of cytidine diphosphate diacylglycerol (CDP-DG) and glycerol 3-phosphate into phosphatidylglycerol. Essential for the synthesis of anionic phospholipids, thereby playing a role in balancing the ratio of zwitterionic and anionic phospholipids, which is thought to be important for normal membrane function. This is CDP-diacylglycerol--glycerol-3-phosphate 3-phosphatidyltransferase from Shigella boydii serotype 4 (strain Sb227).